The primary structure comprises 162 residues: UPF0114 protein VCM66_0196 (162 aa).

4 helical membrane passes run 15 to 35, 53 to 73, 109 to 126, and 136 to 156; these read IMAP…IKFF, LILV…IVMV, VSAS…KVFM, and IKWY…MGYL.

Belongs to the UPF0114 family.

The protein localises to the cell membrane. The sequence is that of UPF0114 protein VCM66_0196 from Vibrio cholerae serotype O1 (strain M66-2).